A 337-amino-acid polypeptide reads, in one-letter code: Inositol 2-dehydrogenase (337 aa).

This sequence belongs to the Gfo/Idh/MocA family. As to quaternary structure, homotetramer.

It catalyses the reaction myo-inositol + NAD(+) = scyllo-inosose + NADH + H(+). Its function is as follows. Involved in the oxidation of myo-inositol (MI) to 2-keto-myo-inositol (2KMI or 2-inosose). The sequence is that of Inositol 2-dehydrogenase from Burkholderia lata (strain ATCC 17760 / DSM 23089 / LMG 22485 / NCIMB 9086 / R18194 / 383).